A 126-amino-acid chain; its full sequence is Interleukin-18-binding protein (126 aa).

The N-terminal stretch at Met-1–Ala-20 is a signal peptide.

This sequence belongs to the orthopoxvirus OPG022 family.

The protein resides in the secreted. Its function is as follows. Soluble IL18-binding protein that may modulate the host antiviral response. The protein is Interleukin-18-binding protein (OPG022) of Bos taurus (Bovine).